The primary structure comprises 211 residues: Arginine exporter protein ArgO (211 aa).

Transmembrane regions (helical) follow at residues 1–21, 37–57, 68–88, 111–131, 147–167, and 182–202; these read MFSY…PLGP, IMIA…GIFG, LLAL…FGAF, IIAT…DTFV, WFAL…AILA, and IINL…ARDG.

The protein belongs to the LysE/ArgO transporter (TC 2.A.75) family.

The protein localises to the cell inner membrane. It carries out the reaction L-arginine(in) = L-arginine(out). In terms of biological role, involved in the export of arginine. Important to control the intracellular level of arginine and the correct balance between arginine and lysine. The chain is Arginine exporter protein ArgO from Escherichia coli O157:H7.